We begin with the raw amino-acid sequence, 396 residues long: S-adenosylmethionine synthase 4 (396 aa).

Glu-13 contacts Mg(2+). Position 19 (His-19) interacts with ATP. Glu-47 provides a ligand contact to K(+). L-methionine-binding residues include Glu-60 and Gln-103. ATP-binding positions include 171 to 173 (DGK), 239 to 242 (SGRF), Asp-250, 256 to 257 (RK), Ala-273, Lys-277, and Lys-281. An L-methionine-binding site is contributed by Asp-250. Lys-281 contributes to the L-methionine binding site.

This sequence belongs to the AdoMet synthase family. Homotetramer. Requires Mn(2+) as cofactor. It depends on Mg(2+) as a cofactor. Co(2+) is required as a cofactor. K(+) serves as cofactor. In terms of tissue distribution, expressed in roots, stems and leaves (at protein level).

It is found in the cytoplasm. It carries out the reaction L-methionine + ATP + H2O = S-adenosyl-L-methionine + phosphate + diphosphate. Its pathway is amino-acid biosynthesis; S-adenosyl-L-methionine biosynthesis; S-adenosyl-L-methionine from L-methionine: step 1/1. Its function is as follows. Catalyzes the formation of S-adenosylmethionine from methionine and ATP. The reaction comprises two steps that are both catalyzed by the same enzyme: formation of S-adenosylmethionine (AdoMet) and triphosphate, and subsequent hydrolysis of the triphosphate. May be involved in the synthesis of betain in response to abiotic stress such as high salinity. This Atriplex nummularia (Old man saltbush) protein is S-adenosylmethionine synthase 4 (SAMS4).